The chain runs to 484 residues: UDP-N-acetylmuramate--L-alanine ligase (484 aa).

126–132 (GTHGKTT) serves as a coordination point for ATP.

The protein belongs to the MurCDEF family.

Its subcellular location is the cytoplasm. It carries out the reaction UDP-N-acetyl-alpha-D-muramate + L-alanine + ATP = UDP-N-acetyl-alpha-D-muramoyl-L-alanine + ADP + phosphate + H(+). The protein operates within cell wall biogenesis; peptidoglycan biosynthesis. Its function is as follows. Cell wall formation. The polypeptide is UDP-N-acetylmuramate--L-alanine ligase (Aeromonas hydrophila subsp. hydrophila (strain ATCC 7966 / DSM 30187 / BCRC 13018 / CCUG 14551 / JCM 1027 / KCTC 2358 / NCIMB 9240 / NCTC 8049)).